The primary structure comprises 373 residues: Dual-specificity RNA methyltransferase RlmN (373 aa).

Glu101 acts as the Proton acceptor in catalysis. The Radical SAM core domain occupies 107–350 (ENKRTTLCVS…TIIRKIRGAD (244 aa)). Cys114 and Cys355 are disulfide-bonded. [4Fe-4S] cluster is bound by residues Cys121, Cys125, and Cys128. Residues 179–180 (GE), Ser211, 233–235 (SLH), and Asn312 contribute to the S-adenosyl-L-methionine site. Residue Cys355 is the S-methylcysteine intermediate of the active site.

The protein belongs to the radical SAM superfamily. RlmN family. [4Fe-4S] cluster is required as a cofactor.

It localises to the cytoplasm. It carries out the reaction adenosine(2503) in 23S rRNA + 2 reduced [2Fe-2S]-[ferredoxin] + 2 S-adenosyl-L-methionine = 2-methyladenosine(2503) in 23S rRNA + 5'-deoxyadenosine + L-methionine + 2 oxidized [2Fe-2S]-[ferredoxin] + S-adenosyl-L-homocysteine. It catalyses the reaction adenosine(37) in tRNA + 2 reduced [2Fe-2S]-[ferredoxin] + 2 S-adenosyl-L-methionine = 2-methyladenosine(37) in tRNA + 5'-deoxyadenosine + L-methionine + 2 oxidized [2Fe-2S]-[ferredoxin] + S-adenosyl-L-homocysteine. Its function is as follows. Specifically methylates position 2 of adenine 2503 in 23S rRNA and position 2 of adenine 37 in tRNAs. m2A2503 modification seems to play a crucial role in the proofreading step occurring at the peptidyl transferase center and thus would serve to optimize ribosomal fidelity. This is Dual-specificity RNA methyltransferase RlmN from Blochmanniella pennsylvanica (strain BPEN).